The chain runs to 317 residues: DNA-directed RNA polymerase subunit alpha (317 aa).

The alpha N-terminal domain (alpha-NTD) stretch occupies residues 1-234 (MKQFNKPEFG…SHFDVFTTLA (234 aa)). Residues 249–317 (EEKELDKPVE…AALELTFKQN (69 aa)) are alpha C-terminal domain (alpha-CTD).

Belongs to the RNA polymerase alpha chain family. In terms of assembly, homodimer. The RNAP catalytic core consists of 2 alpha, 1 beta, 1 beta' and 1 omega subunit. When a sigma factor is associated with the core the holoenzyme is formed, which can initiate transcription.

It carries out the reaction RNA(n) + a ribonucleoside 5'-triphosphate = RNA(n+1) + diphosphate. Its function is as follows. DNA-dependent RNA polymerase catalyzes the transcription of DNA into RNA using the four ribonucleoside triphosphates as substrates. The sequence is that of DNA-directed RNA polymerase subunit alpha from Mesoplasma florum (strain ATCC 33453 / NBRC 100688 / NCTC 11704 / L1) (Acholeplasma florum).